The primary structure comprises 149 residues: Probable flagellum biosynthesis repressor protein FlbT (149 aa).

This sequence belongs to the FlbT family.

Has a post-transcriptional repressor function in flagellum biogenesis. Associates with the 5'-UTR of fljK mRNA and promotes its degradation. This Rhizobium etli (strain ATCC 51251 / DSM 11541 / JCM 21823 / NBRC 15573 / CFN 42) protein is Probable flagellum biosynthesis repressor protein FlbT.